The primary structure comprises 193 residues: Probable GTP-binding protein EngB (193 aa).

An EngB-type G domain is found at 22–193 (GLPEFAFAGR…LIAVLESYLA (172 aa)). GTP-binding positions include 30-37 (GRSNVGKS), 57-61 (GKTQG), 75-78 (DLPG), 142-145 (TKID), and 173-175 (FSS). The Mg(2+) site is built by Ser-37 and Thr-59.

It belongs to the TRAFAC class TrmE-Era-EngA-EngB-Septin-like GTPase superfamily. EngB GTPase family. It depends on Mg(2+) as a cofactor.

Necessary for normal cell division and for the maintenance of normal septation. The sequence is that of Probable GTP-binding protein EngB from Desulfotalea psychrophila (strain LSv54 / DSM 12343).